Here is a 96-residue protein sequence, read N- to C-terminus: Large ribosomal subunit protein eL14 (96 aa).

It belongs to the eukaryotic ribosomal protein eL14 family.

This is Large ribosomal subunit protein eL14 from Saccharolobus islandicus (strain Y.N.15.51 / Yellowstone #2) (Sulfolobus islandicus).